A 419-amino-acid chain; its full sequence is Voltage-gated potassium channel subunit beta-1 (419 aa).

Residues 1 to 52 are disordered; the sequence is MLAARTGAAGSQISEENTKLRRQSGFSVAGKDKSPKKASENAKDSSLSPSGE. Positions 30-43 are enriched in basic and acidic residues; sequence GKDKSPKKASENAK. Residues Thr108, Trp109, Gln115, and Asp137 each coordinate NADP(+). Tyr142 functions as the Proton donor/acceptor in the catalytic mechanism. NADP(+) is bound by residues Asn210, Ser240, Arg241, Gln266, Trp295, Ser296, Pro297, Leu298, Ala299, Cys300, Lys306, Arg316, Gly375, Ser377, Gln381, Glu384, and Asn385.

This sequence belongs to the shaker potassium channel beta subunit family. In terms of assembly, homotetramer. Interaction with tetrameric potassium channel alpha subunits gives rise to a heterooctamer. Identified in potassium channel complexes containing KCNA1, KCNA2, KCNA4, KCNA5, KCNA6, KCNAB1 and KCNAB2. Part of a complex containing KCNA1, KCNA4 and LGI1; interaction with LGI1 inhibits down-regulation of KCNA1 channel activity. Interacts with the dimer formed by GNB1 and GNG2; this enhances KCNA1 binding. Interacts with SQSTM1. As to expression, in brain, expression is most prominent in caudate nucleus, hippocampus and thalamus. Significant expression also detected in amygdala and subthalamic nucleus. Also expressed in both healthy and cardiomyopathic heart. Up to four times more abundant in left ventricle than left atrium.

The protein localises to the cytoplasm. The protein resides in the membrane. It localises to the cell membrane. It carries out the reaction a primary alcohol + NADP(+) = an aldehyde + NADPH + H(+). The enzyme catalyses a secondary alcohol + NADP(+) = a ketone + NADPH + H(+). Functionally, regulatory subunit of the voltage-gated potassium (Kv) Shaker channels composed of pore-forming and potassium-conducting alpha subunits and of regulatory beta subunits. The beta-1/KCNAB1 cytoplasmic subunit mediates closure of delayed rectifier potassium channels by physically obstructing the pore via its N-terminal domain and increases the speed of channel closure for other family members. Promotes the inactivation of Kv1.1/KCNA1, Kv1.2/KCNA2, Kv1.4/KCNA4, Kv1.5/KCNA5 and Kv1.6/KCNA6 alpha subunit-containing channels. Displays nicotinamide adenine dinucleotide phosphate (NADPH)-dependent aldoketoreductase activity by catalyzing the NADPH-dependent reduction of a variety of endogenous aldehydes and ketones. The binding of NADPH is required for efficient down-regulation of potassium channel activity. Oxidation of the bound NADPH restrains N-terminal domain from blocking the channel, thereby decreasing N-type inactivation of potassium channel activity. Isoform KvB1.2 shows no effect on KCNA1, KCNA2 or KCNB1. The sequence is that of Voltage-gated potassium channel subunit beta-1 from Homo sapiens (Human).